A 141-amino-acid polypeptide reads, in one-letter code: Large ribosomal subunit protein uL16m (141 aa).

It belongs to the universal ribosomal protein uL16 family.

It is found in the mitochondrion. This is Large ribosomal subunit protein uL16m (RPL16) from Acanthamoeba castellanii (Amoeba).